The sequence spans 84 residues: Kidney-associated antigen 1 (84 aa).

Positions 31–84 are disordered; that stretch reads PGAAAAHLPRWPPPQLAASRREAPPLSQRPHRTQGAGSPPETNEKLTNPQVKEK. Over residues 75–84 the composition is skewed to polar residues; that stretch reads KLTNPQVKEK.

In terms of tissue distribution, expressed in testis and kidney, and, at lower levels, in urinary bladder and liver. Expressed by a high proportion of tumors of various histologic origin, including melanomas, sarcomas and colorectal carcinomas.

This chain is Kidney-associated antigen 1 (KAAG1), found in Homo sapiens (Human).